Reading from the N-terminus, the 153-residue chain is NADH dehydrogenase [ubiquinone] 1 beta subcomplex subunit 11, mitochondrial (153 aa).

Residues 1-29 (MAAGLFGLSARRLLAAAATRGLPAARVRW) constitute a mitochondrion transit peptide. The disordered stretch occupies residues 40–76 (PSAVAGKRPPEPTTPWQEDPEPEDENLYEKNPDSHGY). The segment covering 66-76 (LYEKNPDSHGY) has biased composition (basic and acidic residues). The helical transmembrane segment at 89 to 109 (LVFFFGVSIILVLGSTFVAYL) threads the bilayer.

This sequence belongs to the complex I NDUFB11 subunit family. In terms of assembly, complex I is composed of 45 different subunits. Interacts with BCAP31. In terms of tissue distribution, ubiquitous.

Its subcellular location is the mitochondrion inner membrane. Accessory subunit of the mitochondrial membrane respiratory chain NADH dehydrogenase (Complex I), that is believed not to be involved in catalysis. Complex I functions in the transfer of electrons from NADH to the respiratory chain. The immediate electron acceptor for the enzyme is believed to be ubiquinone. This chain is NADH dehydrogenase [ubiquinone] 1 beta subcomplex subunit 11, mitochondrial (NDUFB11), found in Homo sapiens (Human).